The following is a 278-amino-acid chain: uncharacterized protein (278 aa).

This is an uncharacterized protein from Escherichia coli (Bacteriophage T4).